Here is a 395-residue protein sequence, read N- to C-terminus: Pyridinium-3,5-bisthiocarboxylic acid mononucleotide nickel insertion protein (395 aa).

It belongs to the LarC family.

The enzyme catalyses Ni(II)-pyridinium-3,5-bisthiocarboxylate mononucleotide = pyridinium-3,5-bisthiocarboxylate mononucleotide + Ni(2+). Involved in the biosynthesis of a nickel-pincer cofactor ((SCS)Ni(II) pincer complex). Binds Ni(2+), and functions in nickel delivery to pyridinium-3,5-bisthiocarboxylic acid mononucleotide (P2TMN), to form the mature cofactor. Is thus probably required for the activation of nickel-pincer cofactor-dependent enzymes. The chain is Pyridinium-3,5-bisthiocarboxylic acid mononucleotide nickel insertion protein from Staphylococcus epidermidis (strain ATCC 12228 / FDA PCI 1200).